An 849-amino-acid chain; its full sequence is Thrombospondin type-1 domain-containing protein 1 (849 aa).

The signal sequence occupies residues 1–24 (MKQTLKDFSNLLLVVLCDYVLGEA). Over 25–413 (EHLVLGEPGH…QPQAPVKSNN (389 aa)) the chain is Extracellular. N-linked (GlcNAc...) asparagine glycans are attached at residues asparagine 39, asparagine 50, asparagine 55, asparagine 66, asparagine 77, asparagine 106, and asparagine 303. A TSP type-1 domain is found at 340–393 (IETWGLWQPWSQCSASCGDGVRERRRVCLTSSPSRPGCPGMSSETSPCSLEDCA). Intrachain disulfides connect cysteine 352–cysteine 387, cysteine 356–cysteine 392, and cysteine 367–cysteine 377. Residues 414–434 (VVTVTGISLCLFIIVATVLIT) form a helical membrane-spanning segment. Over 435-849 (LWRKLGRAPK…STLSVEKLVI (415 aa)) the chain is Cytoplasmic. A Phosphoserine modification is found at serine 463. 3 disordered regions span residues 472–516 (SEPR…SESF), 595–799 (KSPF…KCQS), and 828–849 (GYFG…KLVI). Residues 479 to 493 (SDAGDGPAGSPGDPG) are compositionally biased toward low complexity. The segment covering 636–651 (SQVRSHSRGSHFRRTA) has biased composition (basic residues). The segment covering 652–666 (SFHEARQARPFRERS) has biased composition (basic and acidic residues). Residues 720–732 (SPLPKPHSLGPPP) are compositionally biased toward pro residues.

As to quaternary structure, part of a complex composed of THSD1, PTK2/FAK1, TLN1 and VCL. Interacts with TLN1.

The protein localises to the endosome membrane. Its subcellular location is the cell junction. The protein resides in the focal adhesion. In terms of biological role, is a positive regulator of nascent focal adhesion assembly, involved in the modulation of endothelial cell attachment to the extracellular matrix. This is Thrombospondin type-1 domain-containing protein 1 (THSD1) from Bos taurus (Bovine).